The following is a 155-amino-acid chain: Eosinophil cationic protein (155 aa).

Positions 1–25 (MGLKLLESRLCLLLSLGLVLMLASC) are cleaved as a signal peptide. Catalysis depends on His-38, which acts as the Proton acceptor. Cystine bridges form between Cys-47-Cys-106, Cys-61-Cys-118, Cys-79-Cys-133, and Cys-86-Cys-94. Residue 62 to 66 (KDINT) participates in substrate binding. N-linked (GlcNAc...) asparagine glycosylation is found at Asn-88 and Asn-107. The active-site Proton donor is His-150.

Belongs to the pancreatic ribonuclease family.

The protein resides in the cytoplasmic granule. In terms of biological role, cytotoxin and helminthotoxin with ribonuclease activity. Possesses a wide variety of biological activities. In Rattus norvegicus (Rat), this protein is Eosinophil cationic protein (Rnase3).